The chain runs to 626 residues: DNA-directed RNA polymerase subunit beta C-terminal section (626 aa).

The tract at residues 287 to 307 (NTKSKNTGKGSKPPRASKAQN) is disordered.

This sequence belongs to the RNA polymerase beta chain family. As to quaternary structure, in plastids the minimal PEP RNA polymerase catalytic core is composed of four subunits: alpha, beta, beta', and beta''. When a (nuclear-encoded) sigma factor is associated with the core the holoenzyme is formed, which can initiate transcription.

The protein resides in the plastid. It is found in the chloroplast. The enzyme catalyses RNA(n) + a ribonucleoside 5'-triphosphate = RNA(n+1) + diphosphate. In terms of biological role, DNA-dependent RNA polymerase catalyzes the transcription of DNA into RNA using the four ribonucleoside triphosphates as substrates. The chain is DNA-directed RNA polymerase subunit beta C-terminal section (rpoB2) from Chlamydomonas reinhardtii (Chlamydomonas smithii).